A 491-amino-acid polypeptide reads, in one-letter code: Cobyric acid synthase (491 aa).

The GATase cobBQ-type domain occupies 246 to 432 (RKLIACPILP…VHGLLADAEL (187 aa)). Cys-328 functions as the Nucleophile in the catalytic mechanism. His-424 is a catalytic residue.

This sequence belongs to the CobB/CobQ family. CobQ subfamily.

Its pathway is cofactor biosynthesis; adenosylcobalamin biosynthesis. Catalyzes amidations at positions B, D, E, and G on adenosylcobyrinic A,C-diamide. NH(2) groups are provided by glutamine, and one molecule of ATP is hydrogenolyzed for each amidation. The sequence is that of Cobyric acid synthase from Novosphingobium aromaticivorans (strain ATCC 700278 / DSM 12444 / CCUG 56034 / CIP 105152 / NBRC 16084 / F199).